A 379-amino-acid chain; its full sequence is Lipoyl synthase 1, mitochondrial (379 aa).

Residues Cys106, Cys111, Cys117, Cys137, Cys141, Cys144, and Ser352 each coordinate [4Fe-4S] cluster. One can recognise a Radical SAM core domain in the interval 122-341 (EHGTQTATIM…EERGNELGFL (220 aa)).

It belongs to the radical SAM superfamily. Lipoyl synthase family. The cofactor is [4Fe-4S] cluster.

It localises to the mitochondrion. It catalyses the reaction [[Fe-S] cluster scaffold protein carrying a second [4Fe-4S](2+) cluster] + N(6)-octanoyl-L-lysyl-[protein] + 2 oxidized [2Fe-2S]-[ferredoxin] + 2 S-adenosyl-L-methionine + 4 H(+) = [[Fe-S] cluster scaffold protein] + N(6)-[(R)-dihydrolipoyl]-L-lysyl-[protein] + 4 Fe(3+) + 2 hydrogen sulfide + 2 5'-deoxyadenosine + 2 L-methionine + 2 reduced [2Fe-2S]-[ferredoxin]. Its pathway is protein modification; protein lipoylation via endogenous pathway; protein N(6)-(lipoyl)lysine from octanoyl-[acyl-carrier-protein]: step 2/2. Functionally, catalyzes the radical-mediated insertion of two sulfur atoms into the C-6 and C-8 positions of the octanoyl moiety bound to the lipoyl domains of lipoate-dependent enzymes, thereby converting the octanoylated domains into lipoylated derivatives. The polypeptide is Lipoyl synthase 1, mitochondrial (Drosophila yakuba (Fruit fly)).